The sequence spans 192 residues: Peptidyl-tRNA hydrolase (192 aa).

Tyr-14 contacts tRNA. The active-site Proton acceptor is the His-19. Tyr-64, Asn-66, and Asn-112 together coordinate tRNA.

Belongs to the PTH family. In terms of assembly, monomer.

Its subcellular location is the cytoplasm. It catalyses the reaction an N-acyl-L-alpha-aminoacyl-tRNA + H2O = an N-acyl-L-amino acid + a tRNA + H(+). In terms of biological role, hydrolyzes ribosome-free peptidyl-tRNAs (with 1 or more amino acids incorporated), which drop off the ribosome during protein synthesis, or as a result of ribosome stalling. Catalyzes the release of premature peptidyl moieties from peptidyl-tRNA molecules trapped in stalled 50S ribosomal subunits, and thus maintains levels of free tRNAs and 50S ribosomes. The sequence is that of Peptidyl-tRNA hydrolase from Prosthecochloris aestuarii (strain DSM 271 / SK 413).